Consider the following 116-residue polypeptide: Large ribosomal subunit protein bL19 (116 aa).

The protein belongs to the bacterial ribosomal protein bL19 family.

This protein is located at the 30S-50S ribosomal subunit interface and may play a role in the structure and function of the aminoacyl-tRNA binding site. This chain is Large ribosomal subunit protein bL19, found in Pseudomonas entomophila (strain L48).